Consider the following 154-residue polypeptide: CS6 fimbrial subunit A (154 aa).

Residues 1–18 (MKKTIGLILILASFGSHA) form the signal peptide.

The protein localises to the fimbrium. Functionally, fimbriae (also called pili), polar filaments radiating from the surface of the bacterium to a length of 0.5-1.5 micrometers and numbering 100-300 per cell, enable bacteria to colonize the epithelium of specific host organs. This is CS6 fimbrial subunit A (cssA) from Escherichia coli.